We begin with the raw amino-acid sequence, 167 residues long: D-aminoacyl-tRNA deacylase 2 (167 aa).

Positions 159 to 160 (GP) match the Gly-transPro motif, allows the protein to recognize chirality of D-amino acids motif.

This sequence belongs to the DTD family. As to quaternary structure, homodimer.

It is found in the cytoplasm. The catalysed reaction is a D-aminoacyl-tRNA + H2O = a tRNA + a D-alpha-amino acid + H(+). It catalyses the reaction glycyl-tRNA(Ala) + H2O = tRNA(Ala) + glycine + H(+). It carries out the reaction D-tyrosyl-tRNA(Tyr) + H2O = D-tyrosine + tRNA(Tyr). The enzyme catalyses L-alanyl-tRNA(Thr) + H2O = tRNA(Thr) + L-alanine + H(+). In terms of biological role, deacylates mischarged D-aminoacyl-tRNAs. Also deacylates mischarged glycyl-tRNA(Ala), protecting cells against glycine mischarging by AlaRS. Probably acts by rejecting L-amino acids from its binding site rather than specific recognition of D-amino acids. Catalyzes the hydrolysis of D-tyrosyl-tRNA(Tyr), has no activity on correctly charged L-tyrosyl-tRNA(Tyr). By recycling D-aminoacyl-tRNA to D-amino acids and free tRNA molecules, this enzyme counteracts the toxicity associated with the formation of D-aminoacyl-tRNA entities in vivo and helps enforce protein L-homochirality. In contrast to DTD1, deacylates L-Ala mischarged on tRNA(Thr)(G4.U69) by alanine-tRNA ligase AARS. Can deacylate L-Ala due to a relaxed specificity for substrate chirality caused by the trans conformation of the Gly-Pro motif in the active site. Also hydrolyzes correctly charged, achiral, glycyl-tRNA(Gly) in vitro, although in vivo EEF1A1/EF-Tu may protect cognate achiral glycyl-tRNA(Gly) from DTD2-mediated deacetylation. This chain is D-aminoacyl-tRNA deacylase 2 (DTD2), found in Gallus gallus (Chicken).